Reading from the N-terminus, the 445-residue chain is Phosphoglucosamine mutase (445 aa).

Serine 102 acts as the Phosphoserine intermediate in catalysis. Residues serine 102, aspartate 241, aspartate 243, and aspartate 245 each coordinate Mg(2+). A Phosphoserine modification is found at serine 102.

Belongs to the phosphohexose mutase family. The cofactor is Mg(2+). Post-translationally, activated by phosphorylation.

It catalyses the reaction alpha-D-glucosamine 1-phosphate = D-glucosamine 6-phosphate. In terms of biological role, catalyzes the conversion of glucosamine-6-phosphate to glucosamine-1-phosphate. This Photorhabdus laumondii subsp. laumondii (strain DSM 15139 / CIP 105565 / TT01) (Photorhabdus luminescens subsp. laumondii) protein is Phosphoglucosamine mutase.